The sequence spans 444 residues: CBL-interacting serine/threonine-protein kinase 1 (444 aa).

Positions 20-275 (YELGRTLGEG…VVGIKASEWF (256 aa)) constitute a Protein kinase domain. ATP-binding positions include 26-34 (LGEGNFGKV) and Lys-49. The Proton acceptor role is filled by Asp-143. Residues 161 to 190 (DFGLSALPQHFRDDGLLHTTCGSPNYVAPE) form an activation loop region. Phosphoserine is present on Ser-165. Thr-179 is modified (phosphothreonine). One can recognise an NAF domain in the interval 313-337 (DSPTIINAFQLIGMSSFLDLSGFFE). Residues 343–372 (ERRIRFTSNSSAKDLLEKIETAVTEMGFSV) form a PPI region.

This sequence belongs to the protein kinase superfamily. CAMK Ser/Thr protein kinase family. SNF1 subfamily. As to quaternary structure, interacts with CBL1. Interacts with CBL2. Interacts with CBL3. Interacts with CBL9. Interacts with ECT1 and ECT2. Mn(2+) serves as cofactor. Post-translationally, autophosphorylated. Ubiquitous.

The catalysed reaction is L-seryl-[protein] + ATP = O-phospho-L-seryl-[protein] + ADP + H(+). It carries out the reaction L-threonyl-[protein] + ATP = O-phospho-L-threonyl-[protein] + ADP + H(+). In terms of biological role, CIPK serine-threonine protein kinases interact with CBL proteins. Binding of a CBL protein to the regulatory NAF domain of CIPK protein lead to the activation of the kinase in a calcium-dependent manner. The chain is CBL-interacting serine/threonine-protein kinase 1 (CIPK1) from Arabidopsis thaliana (Mouse-ear cress).